We begin with the raw amino-acid sequence, 372 residues long: Heat-inducible transcription repressor HrcA (372 aa).

The interval 300–334 is disordered; the sequence is YGRSGAAGEPAGNDPVGEPETESETESQTNDTEPI.

The protein belongs to the HrcA family.

Negative regulator of class I heat shock genes (grpE-dnaK-dnaJ and groELS operons). Prevents heat-shock induction of these operons. The chain is Heat-inducible transcription repressor HrcA from Bifidobacterium longum (strain NCC 2705).